A 552-amino-acid chain; its full sequence is Putative acetolactate synthase large subunit IlvB2 (552 aa).

Residue E48 participates in thiamine diphosphate binding. FAD-binding positions include 262–285 (FGDG…VGVS) and 309–328 (DPDP…ITTS). Residues 394–474 (TCISWTFRGI…VTWAVLNDGQ (81 aa)) form a thiamine pyrophosphate binding region. D445 provides a ligand contact to Mg(2+).

It belongs to the TPP enzyme family. As to quaternary structure, heterodimer of large catalytic subunit and small regulatory subunit. Mg(2+) is required as a cofactor. The cofactor is thiamine diphosphate.

It catalyses the reaction 2 pyruvate + H(+) = (2S)-2-acetolactate + CO2. Its pathway is amino-acid biosynthesis; L-isoleucine biosynthesis; L-isoleucine from 2-oxobutanoate: step 1/4. The protein operates within amino-acid biosynthesis; L-valine biosynthesis; L-valine from pyruvate: step 1/4. In terms of biological role, catalyzes the conversion of 2 pyruvate molecules into acetolactate in the first common step of the biosynthetic pathway of the branched-amino acids such as leucine, isoleucine, and valine. The polypeptide is Putative acetolactate synthase large subunit IlvB2 (ilvB2) (Mycobacterium tuberculosis (strain ATCC 25618 / H37Rv)).